We begin with the raw amino-acid sequence, 220 residues long: Ribonuclease HII (220 aa).

Residues 32–220 form the RNase H type-2 domain; the sequence is KHIAGIDEAG…FAPIKGRFDC (189 aa). A divalent metal cation contacts are provided by aspartate 38, glutamate 39, and aspartate 130.

The protein belongs to the RNase HII family. It depends on Mn(2+) as a cofactor. Requires Mg(2+) as cofactor.

It localises to the cytoplasm. It catalyses the reaction Endonucleolytic cleavage to 5'-phosphomonoester.. In terms of biological role, endonuclease that specifically degrades the RNA of RNA-DNA hybrids. In Brucella canis (strain ATCC 23365 / NCTC 10854 / RM-666), this protein is Ribonuclease HII.